A 213-amino-acid chain; its full sequence is Kynurenine formamidase (213 aa).

Trp-18 contributes to the substrate binding site. Zn(2+)-binding residues include His-48, His-52, and Asp-54. His-58 (proton donor/acceptor) is an active-site residue. Zn(2+) contacts are provided by His-160 and Glu-172.

This sequence belongs to the Cyclase 1 superfamily. KynB family. As to quaternary structure, homodimer. Zn(2+) is required as a cofactor.

The catalysed reaction is N-formyl-L-kynurenine + H2O = L-kynurenine + formate + H(+). It participates in amino-acid degradation; L-tryptophan degradation via kynurenine pathway; L-kynurenine from L-tryptophan: step 2/2. Its function is as follows. Catalyzes the hydrolysis of N-formyl-L-kynurenine to L-kynurenine, the second step in the kynurenine pathway of tryptophan degradation. This is Kynurenine formamidase from Burkholderia multivorans (strain ATCC 17616 / 249).